Consider the following 62-residue polypeptide: uncharacterized protein (62 aa).

The helical transmembrane segment at 17-37 threads the bilayer; that stretch reads IVFFLGLVVVLLMMINLYMLI.

The protein resides in the membrane. This is an uncharacterized protein from Helicobacter pylori (strain J99 / ATCC 700824) (Campylobacter pylori J99).